The primary structure comprises 155 residues: Large ribosomal subunit protein uL13 (155 aa).

It belongs to the universal ribosomal protein uL13 family. As to quaternary structure, part of the 50S ribosomal subunit.

Its function is as follows. This protein is one of the early assembly proteins of the 50S ribosomal subunit, although it is not seen to bind rRNA by itself. It is important during the early stages of 50S assembly. The sequence is that of Large ribosomal subunit protein uL13 from Rickettsia typhi (strain ATCC VR-144 / Wilmington).